A 384-amino-acid chain; its full sequence is L-lactate dehydrogenase (384 aa).

Residues 1-380 (MIISSSNDYR…NESCLVEMNK (380 aa)) form the FMN hydroxy acid dehydrogenase domain. A substrate-binding site is contributed by Tyr-24. FMN is bound by residues Ser-106 and Gln-127. Tyr-129 is a binding site for substrate. Residue Thr-155 coordinates FMN. Position 164 (Arg-164) interacts with substrate. Residue Lys-251 coordinates FMN. The active-site Proton acceptor is His-275. Position 278 (Arg-278) interacts with substrate. Position 306-330 (306-330 (DSGIRNGLDVVRMLALGADSVMLGR)) interacts with FMN.

The protein belongs to the FMN-dependent alpha-hydroxy acid dehydrogenase family. Requires FMN as cofactor.

The protein resides in the cell inner membrane. It catalyses the reaction (S)-lactate + A = pyruvate + AH2. Its function is as follows. Catalyzes the conversion of L-lactate to pyruvate. Is coupled to the respiratory chain. The sequence is that of L-lactate dehydrogenase from Acinetobacter baylyi (strain ATCC 33305 / BD413 / ADP1).